A 1022-amino-acid polypeptide reads, in one-letter code: Collagen alpha-1(I) chain (1022 aa).

The segment at serine 1–proline 1022 is disordered. 11 positions are modified to 4-hydroxyproline: proline 20, proline 23, proline 26, proline 35, proline 38, proline 41, proline 56, proline 71, proline 77, proline 86, and proline 92. Residues proline 28–methionine 47 show a composition bias toward low complexity. A compositionally biased stretch (basic and acidic residues) spans asparagine 59 to glutamate 73. Lysine 95 bears the 5-hydroxylysine; alternate mark. Lysine 95 carries an O-linked (Gal...) hydroxylysine; alternate glycan. Serine 101 is subject to Phosphoserine. Positions aspartate 109–asparagine 125 are enriched in low complexity. A 4-hydroxyproline mark is found at proline 119, proline 122, proline 128, proline 137, proline 143, proline 164, proline 173, proline 176, proline 203, proline 206, proline 218, proline 224, proline 233, proline 239, proline 242, and proline 257. Residues proline 143–alanine 161 show a composition bias toward low complexity. Pro residues predominate over residues proline 163–phenylalanine 175. Over residues alanine 209–proline 259 the composition is skewed to low complexity. 5-hydroxylysine is present on lysine 260. Residues proline 266, proline 269, proline 281, proline 290, proline 305, proline 311, proline 320, and proline 326 each carry the 4-hydroxyproline modification. Residues glycine 315–glycine 324 show a composition bias toward gly residues. 5-hydroxylysine is present on lysine 335. Residues proline 344, proline 353, proline 359, proline 365, proline 374, proline 377, proline 386, proline 395, proline 401, proline 413, proline 422, proline 431, proline 434, proline 452, proline 470, proline 476, proline 482, proline 488, proline 494, proline 500, proline 512, proline 521, proline 533, proline 545, proline 548, proline 554, proline 560, and proline 569 each carry the 4-hydroxyproline modification. The span at lysine 368 to arginine 394 shows a compositional bias: low complexity. The span at alanine 403–proline 422 shows a compositional bias: low complexity. Positions glutamine 464–glutamine 491 are enriched in low complexity. Low complexity predominate over residues asparagine 530–glutamine 557. 5-hydroxylysine is present on lysine 581. 4-hydroxyproline occurs at positions 587, 602, and 608. The span at serine 614–alanine 628 shows a compositional bias: low complexity. Phosphoserine is present on serine 617. A 4-hydroxyproline mark is found at proline 629, proline 635, proline 638, proline 647, proline 653, proline 671, proline 680, and proline 689. Low complexity predominate over residues alanine 641–alanine 668. A compositionally biased stretch (pro residues) spans proline 670–proline 682. Lysine 692 carries the 5-hydroxylysine modification. The segment covering serine 697 to valine 713 has biased composition (low complexity). 4-hydroxyproline occurs at positions 701 and 707. A 3-hydroxyproline modification is found at proline 715. Proline 716, proline 725, proline 728, proline 749, proline 758, proline 767, proline 776, proline 794, proline 803, proline 806, proline 812, proline 827, proline 833, proline 839, proline 848, and proline 854 each carry 4-hydroxyproline. Residues glutamate 742–glutamate 751 are compositionally biased toward low complexity. A compositionally biased stretch (low complexity) spans threonine 761–proline 776. A compositionally biased stretch (pro residues) spans proline 826–alanine 836. A compositionally biased stretch (low complexity) spans proline 838–serine 853. Residue lysine 863 is modified to 5-hydroxylysine. Residues alanine 872 to valine 887 show a composition bias toward pro residues. Proline 875, proline 878, and proline 881 each carry 4-hydroxyproline. Low complexity predominate over residues alanine 908 to proline 922. Over residues arginine 923–isoleucine 937 the composition is skewed to basic and acidic residues. A 5-hydroxylysine modification is found at lysine 926. At lysine 938 the chain carries 5-hydroxylysine; alternate. O-linked (Gal...) hydroxylysine; alternate glycosylation is present at lysine 938. 4 positions are modified to 4-hydroxyproline: proline 953, proline 956, proline 974, and proline 989. The segment covering proline 956–proline 989 has biased composition (low complexity). The residue at position 994 (proline 994) is a 3-hydroxyproline. Proline 995 is subject to 4-hydroxyproline. Over residues valine 1007 to proline 1022 the composition is skewed to pro residues. Position 1009 is a 3-hydroxyproline (proline 1009). Proline 1010 is modified (4-hydroxyproline). Proline 1012 is subject to 3-hydroxyproline. The residue at position 1013 (proline 1013) is a 4-hydroxyproline. At proline 1015 the chain carries 3-hydroxyproline. A 4-hydroxyproline mark is found at proline 1016, proline 1019, and proline 1022.

This sequence belongs to the fibrillar collagen family. As to quaternary structure, trimers of one alpha 2(I) and two alpha 1(I) chains. Prolines at the third position of the tripeptide repeating unit (G-X-Y) are hydroxylated in some or all of the chains. Expressed in bone.

The protein resides in the secreted. It localises to the extracellular space. The protein localises to the extracellular matrix. In terms of biological role, type I collagen is a member of group I collagen (fibrillar forming collagen). The sequence is that of Collagen alpha-1(I) chain from Mylodon darwinii (Giant ground sloth).